Reading from the N-terminus, the 629-residue chain is MSTKPKNAAHLSESAQVDSGSVQPFTRSQKIYVQGSRPDIRVPMREVTLDVTPTDFGGEINAPVTVYDTSGPYTDPNVIIDVRKGLADVRSPWIDSRNDTERLPGLSSHFGQQRLSDAELTALRFAHVRNPRRAKAGANVSQMHYARQGIITAEMEYVAIRENMKLQEARAAGLLTQQHAGHSFGASIPKEITAEFVREEIARGRAIIPANINHVELEPMIIGRNFLVKINGNIGNSALGSSIEEEVAKLTWGIRWGSDTVMDLSTGKHIHETREWIIRNSPVPIGTVPIYQALEKVGGAAEDLTWELFRDTLIEQAEQGVDYFTIHAGVLLRYVPLTAKRVTGIVSRGGSIMAKWCLAHHQENFLYTHFEDICEIMKAYDVSFSLGDGLRPGSIADANDAAQFGELETLGELTKIAWKHDLQTMIEGPGHVPMQLIKENMDKQLECCDEAPFYTLGPLTTDIAPGYDHITSGIGAAMIGWFGCAMLCYVTPKEHLGLPNKDDVKTGIITYKIAAHAADLAKGHPGAQIRDNALSKARFEFRWEDQFNLGLDPDTARSYHDETLPKDSAKVAHFCSMCGPKFCSMKITQEVREYAANQRIEAVDVDVARGLAEQAERFKQEGSQLYKKV.

Residues 1-24 are disordered; the sequence is MSTKPKNAAHLSESAQVDSGSVQP. Polar residues predominate over residues 13 to 24; that stretch reads ESAQVDSGSVQP. Residues Asn-233, Met-262, Tyr-291, His-327, 347-349, 388-391, and Glu-427 contribute to the substrate site; these read SRG and DGLR. His-431 is a Zn(2+) binding site. Residue Tyr-454 participates in substrate binding. Position 495 (His-495) interacts with Zn(2+). [4Fe-4S] cluster contacts are provided by Cys-575, Cys-578, and Cys-583.

It belongs to the ThiC family. In terms of assembly, homodimer. The cofactor is [4Fe-4S] cluster.

It catalyses the reaction 5-amino-1-(5-phospho-beta-D-ribosyl)imidazole + S-adenosyl-L-methionine = 4-amino-2-methyl-5-(phosphooxymethyl)pyrimidine + CO + 5'-deoxyadenosine + formate + L-methionine + 3 H(+). It functions in the pathway cofactor biosynthesis; thiamine diphosphate biosynthesis. Functionally, catalyzes the synthesis of the hydroxymethylpyrimidine phosphate (HMP-P) moiety of thiamine from aminoimidazole ribotide (AIR) in a radical S-adenosyl-L-methionine (SAM)-dependent reaction. This is Phosphomethylpyrimidine synthase from Pseudomonas syringae pv. tomato (strain ATCC BAA-871 / DC3000).